Reading from the N-terminus, the 779-residue chain is MSRFPAVAGRAPRRQEEGERSRDLQEERLSAVCIADREEKGCTSQEGGTTPTFPIQKQRKKIIQAVRDNSFLIVTGNTGSGKTTQLPKYLYEAGFSQHGMIGVTQPRKVAAISVAQRVAEEMKCTLGSKVGYQVRFDDCSSKETAIKYMTDGCLLKHILGDPNLTKFSVIILDEAHERTLTTDILFGLLKKLFQEKSPNRKEHLKVVVMSATMELAKLSAFFGNCPIFDIPGRLYPVREKFCNLIGPRDRENTAYIQAIVKVTMDIHLNEMAGDILVFLTGQFEIEKSCELLFQMAESVDYDYDVQDTTLDGLLILPCYGSMTTDQQRRIFLPPPPGIRKCVISTNISATSLTIDGIRYVVDGGFVKQLNHNPRLGLDILEVVPISKSEALQRSGRAGRTSSGKCFRIYSKDFWNQCMPDHVIPEIKRTSLTSVVLTLKCLAIHDVIRFPYLDPPNERLILEALKQLYQCDAIDRSGHVTRLGLSMVEFPLPPHLTCAVIKAASLDCEDLLLPIAAMLSVENVFIRPVDPEYQKEAEQRHRELAAKAGGFNDFATLAVIFEQCKSSGAPASWCQKHWIHWRCLFSAFRVEAQLRELIRKLKQQSDFPKETFEGPKHEVLRRCLCAGYFKNVARRSVGRTFCTMDGRGSPVHIHPSSALHEQETKLEWIIFHEVLVTTKVYARIVCPIRYEWVRDLLPKLHEFNAHDLSSVARREVREDARRRWTNKENVKQLKDGISKDVLKKMQRRNDDKSISDARARFLERKQQRTQDHSDTRKETG.

The tract at residues 1-28 (MSRFPAVAGRAPRRQEEGERSRDLQEER) is disordered. Residues 13–28 (RRQEEGERSRDLQEER) show a composition bias toward basic and acidic residues. A Helicase ATP-binding domain is found at 63–231 (IQAVRDNSFL…FGNCPIFDIP (169 aa)). Residue 76-83 (GNTGSGKT) participates in ATP binding. The short motif at 173 to 176 (DEAH) is the DEAH box element. The 180-residue stretch at 263–442 (TMDIHLNEMA…SVVLTLKCLA (180 aa)) folds into the Helicase C-terminal domain. Positions 737–779 (SKDVLKKMQRRNDDKSISDARARFLERKQQRTQDHSDTRKETG) are disordered.

This sequence belongs to the DEAD box helicase family. DEAH subfamily. Ubiquitously expressed.

It carries out the reaction ATP + H2O = ADP + phosphate + H(+). In terms of biological role, probable ATP-dependent RNA helicase. This chain is Probable ATP-dependent RNA helicase DHX40 (DHX40), found in Homo sapiens (Human).